We begin with the raw amino-acid sequence, 436 residues long: GTPase Der (436 aa).

2 consecutive EngA-type G domains span residues 3 to 168 (PLVA…EEKS) and 177 to 352 (IRLA…EQRS). Residues 9 to 16 (GRPNVGKS), 56 to 60 (DTGGY), 120 to 123 (NKVE), 183 to 190 (GRPNVGKS), 230 to 234 (DTAGL), and 295 to 298 (NKWD) each bind GTP. The KH-like domain maps to 353-436 (QQITTSDLNR…VPFSLRFMQK (84 aa)).

This sequence belongs to the TRAFAC class TrmE-Era-EngA-EngB-Septin-like GTPase superfamily. EngA (Der) GTPase family. Associates with the 50S ribosomal subunit.

Functionally, GTPase that plays an essential role in the late steps of ribosome biogenesis. This is GTPase Der from Prosthecochloris aestuarii (strain DSM 271 / SK 413).